A 505-amino-acid chain; its full sequence is Maturase K (505 aa).

This sequence belongs to the intron maturase 2 family. MatK subfamily.

The protein resides in the plastid. It localises to the chloroplast. Functionally, usually encoded in the trnK tRNA gene intron. Probably assists in splicing its own and other chloroplast group II introns. This Cubanola domingensis protein is Maturase K.